The primary structure comprises 129 residues: Large ribosomal subunit protein bL12 (129 aa).

It belongs to the bacterial ribosomal protein bL12 family. As to quaternary structure, homodimer. Part of the ribosomal stalk of the 50S ribosomal subunit. Forms a multimeric L10(L12)X complex, where L10 forms an elongated spine to which 2 to 4 L12 dimers bind in a sequential fashion. Binds GTP-bound translation factors.

Forms part of the ribosomal stalk which helps the ribosome interact with GTP-bound translation factors. Is thus essential for accurate translation. The polypeptide is Large ribosomal subunit protein bL12 (Mycobacteroides abscessus (strain ATCC 19977 / DSM 44196 / CCUG 20993 / CIP 104536 / JCM 13569 / NCTC 13031 / TMC 1543 / L948) (Mycobacterium abscessus)).